Reading from the N-terminus, the 92-residue chain is Small ribosomal subunit protein uS19c (92 aa).

It belongs to the universal ribosomal protein uS19 family.

Its subcellular location is the plastid. The protein resides in the chloroplast. Its function is as follows. Protein S19 forms a complex with S13 that binds strongly to the 16S ribosomal RNA. In Coffea arabica (Arabian coffee), this protein is Small ribosomal subunit protein uS19c.